The primary structure comprises 283 residues: Cyclin-C (283 aa).

Residues 46-144 (NVIQALGEHL…ILECEFYLLE (99 aa)) enclose the Cyclin N-terminal domain. The interval 252–283 (TILSKMPKPKPPPNSEGEQGPNGSQNSSYSQS) is disordered. Residues 272-283 (PNGSQNSSYSQS) are compositionally biased toward polar residues.

Belongs to the cyclin family. Cyclin C subfamily. In terms of assembly, component of the Mediator complex. The cylin/CDK pair formed by CCNC/CDK8 also associates with the large subunit of RNA polymerase II.

It localises to the nucleus. Functionally, component of the Mediator complex, a coactivator involved in regulated gene transcription of nearly all RNA polymerase II-dependent genes. Mediator functions as a bridge to convey information from gene-specific regulatory proteins to the basal RNA polymerase II transcription machinery. Mediator is recruited to promoters by direct interactions with regulatory proteins and serves as a scaffold for the assembly of a functional preinitiation complex with RNA polymerase II and the general transcription factors. Binds to and activates cyclin-dependent kinase CDK8 that phosphorylates the CTD (C-terminal domain) of the large subunit of RNA polymerase II (RNAp II), which may inhibit the formation of a transcription initiation complex. The protein is Cyclin-C (CCNC) of Gallus gallus (Chicken).